Consider the following 135-residue polypeptide: Large ribosomal subunit protein uL16c (135 aa).

This sequence belongs to the universal ribosomal protein uL16 family. Part of the 50S ribosomal subunit.

It localises to the plastid. The protein resides in the chloroplast. In Ranunculus macranthus (Large buttercup), this protein is Large ribosomal subunit protein uL16c.